We begin with the raw amino-acid sequence, 1086 residues long: Calcium-transporting ATPase 9, plasma membrane-type (1086 aa).

The span at 1-15 (MSTSSSNGLLLTSMS) shows a compositional bias: low complexity. A disordered region spans residues 1–50 (MSTSSSNGLLLTSMSGRHDDMEAGSAKTEEHSDHEELQHDPDDPFDIDNT). The Cytoplasmic portion of the chain corresponds to 1 to 194 (MSTSSSNGLL…NTYPKKKGKN (194 aa)). The segment covering 16-42 (GRHDDMEAGSAKTEEHSDHEELQHDPD) has biased composition (basic and acidic residues). Positions 57–68 (SLRRWRQAALVL) are interaction with calmodulin. The helical transmembrane segment at 195-215 (FFMFLWEAWQDLTLIILIIAA) threads the bilayer. At 216–233 (VTSLALGIKTEGLKEGWL) the chain is on the lumenal side. A helical transmembrane segment spans residues 234 to 254 (DGGSIAFAVLLVIVVTAVSDY). Topologically, residues 255–382 (RQSLQFQNLN…GEETPLQVRL (128 aa)) are cytoplasmic. The chain crosses the membrane as a helical span at residues 383 to 402 (NGLATFIGIVGLSVALVVLV). The Lumenal segment spans residues 403–439 (ALLVRYFTGTTQDTNGATQFIKGTTSISDIVDDCVKI). A helical membrane pass occupies residues 440–457 (FTIAVTIVVVAVPEGLPL). The Cytoplasmic portion of the chain corresponds to 458-857 (AVTLTLAYSM…RWGRSVYANI (400 aa)). Asp495 serves as the catalytic 4-aspartylphosphate intermediate. Mg(2+)-binding residues include Asp802 and Asp806. A helical membrane pass occupies residues 858–876 (QKFIQFQLTVNVAALIINV). The Lumenal portion of the chain corresponds to 877–887 (VAAMSSGDVPL). Residues 888-908 (KAVQLLWVNLIMDTLGALALA) traverse the membrane as a helical segment. The Cytoplasmic segment spans residues 909–928 (TEPPTDHLMHRTPVGRREPL). The chain crosses the membrane as a helical span at residues 929-951 (ITNIMWRNLLVQSFYQVAVLLVL). At 952 to 963 (NFAGLSILGLNH) the chain is on the lumenal side. Residues 964-988 (ENHAHAVEVKNTMIFNAFVMCQIFN) form a helical membrane-spanning segment. Topologically, residues 989–1006 (EFNARKPDEMNVFRGVNK) are cytoplasmic. A helical membrane pass occupies residues 1007 to 1028 (NPLFVAIVGVTFILQIIIVTFL). At 1029 to 1038 (GKFAHTVRLG) the chain is on the lumenal side. Residues 1039-1060 (WQLWLASIIIGLVSWPLAIVGK) form a helical membrane-spanning segment. Topologically, residues 1061–1086 (LIPVPKTPMSVYFKKPFRKYKASRNA) are cytoplasmic.

It belongs to the cation transport ATPase (P-type) (TC 3.A.3) family. Type IIB subfamily.

The protein resides in the membrane. The catalysed reaction is Ca(2+)(in) + ATP + H2O = Ca(2+)(out) + ADP + phosphate + H(+). With respect to regulation, activated by calmodulin. Functionally, this magnesium-dependent enzyme catalyzes the hydrolysis of ATP coupled with the translocation of calcium from the cytosol out of the cell or into organelles. This is Calcium-transporting ATPase 9, plasma membrane-type (ACA9) from Arabidopsis thaliana (Mouse-ear cress).